The chain runs to 824 residues: MPIHTPRRTSLFQRSKTLPTNSYRRFTSPVIPTFRYDDGDTVSYDGDDSSNLPTVPNPEEKPVPVPSQSPSQRITRLWTQFSLTHCLKFICSCSFTYVMFLRSKVSRLEAENIILLTRCNSSSDNNEMEETNSRAVVFFSVIITFVLPFLLYMYLDDLSHVKNLLRRTNQKKEDVPLKKRLAYSLDVCFSVYPYAKLLALLLATVVLIVYGGLALYAVSDCGVDEALWLSWTFVADSGSHADRVGVGARIVSVAISAGGMLIFATMLGLISDAISKMVDSLRKGKSEVLESNHILILGWSDKLGSLLKQLAIANKSIGGGVVVVLAERDKEEMETDIAKFEFDLMGTSVICRSGSPLILADLKKVSVSNARAIIVLGSDENADQSDARALRVVLSLTGVKEGWKGHVVVEMCDLDNEPLVKLVGGERIETVVAHDVIGRLMIQCALQPGLAQIWEDILGFENAEFYIKKWPQLDGYCFEDVLISFPNAIPCGVKVAADGKIVLNPSDDYVLKEGDEILVIAEDDDTYAPGSLPEVRMCHFPKMQDPPKYPEKILFCGWRRDIDDMIKVLEALLAPGSELWMFNEVPDQEREKKLTDAGLNISKLVNIKLVHRQGNAVIRRHLESLPLETFDSILILAEQSLENSIVHSDSRSLATLLLIRDIQSKRLPYKDAKSSALRISGFPNCCWIRKMQQASDKSIVISEILDSRTKNLVSVSRISDYVLSNELVSMALAMVAEDKQINRVLKELFAEKGNELCIRPAEFYIYDQEEVCFYDIMRRARQRQEIIIGYRLAGMEQAVINPTDKSKLTKWSLDDVFVVIASSQ.

Low complexity predominate over residues 45-54; that stretch reads DGDDSSNLPT. The segment at 45 to 70 is disordered; sequence DGDDSSNLPTVPNPEEKPVPVPSQSP. Helical transmembrane passes span 81-101, 135-155, 198-218, and 250-270; these read FSLT…VMFL, AVVF…YMYL, LALL…LYAV, and IVSV…LGLI. RCK N-terminal domains lie at 291–432 and 550–699; these read SNHI…ETVV and PEKI…DKSI. Residues 325–346 are a coiled coil; it reads LAERDKEEMETDIAKFEFDLMG.

Belongs to the castor/pollux (TC 1.A.1.23) family.

It localises to the nucleus membrane. The polypeptide is Probable ion channel POLLUX (Arabidopsis thaliana (Mouse-ear cress)).